The primary structure comprises 381 residues: Estradiol 17-beta-dehydrogenase 2 (381 aa).

A helical; Signal-anchor for type II membrane protein membrane pass occupies residues 4–24; sequence FASESAWLCLAAAAVLGGTLL. An NAD(+)-binding site is contributed by 83–112; sequence QKAVLVTGADSGFGHGLAKHLDKLGFTVFA. Ser220 contributes to the substrate binding site. Tyr233 acts as the Proton acceptor in catalysis.

The protein belongs to the short-chain dehydrogenases/reductases (SDR) family. As to quaternary structure, homodimer.

The protein localises to the endoplasmic reticulum membrane. The catalysed reaction is 17beta-estradiol + NAD(+) = estrone + NADH + H(+). The enzyme catalyses testosterone + NAD(+) = androst-4-ene-3,17-dione + NADH + H(+). It catalyses the reaction 17beta-hydroxy-5alpha-androstan-3-one + NAD(+) = 5alpha-androstan-3,17-dione + NADH + H(+). It carries out the reaction (20S)-hydroxypregn-4-en-3-one + NAD(+) = progesterone + NADH + H(+). Functionally, catalyzes the NAD-dependent oxidation of highly active 17beta-hydroxysteroids, such as estradiol (E2), testosterone (T), and dihydrotestosterone (DHT), to their less active forms and thus regulates the biological potency of these steroids. Oxidizes estradiol to estrone, testosterone to androstenedione, and dihydrotestosterone to 5alpha-androstan-3,17-dione. Also has 20-alpha-HSD activity. This Mus musculus (Mouse) protein is Estradiol 17-beta-dehydrogenase 2 (Hsd17b2).